The sequence spans 695 residues: ATP-dependent zinc metalloprotease FTSH 2, chloroplastic (695 aa).

The transit peptide at 1-47 (MAASSACLVGNGLSVNTTTKQRLSKHFSGRQTSFSSVIRTSKVNVVK) directs the protein to the chloroplast. Residues 48-82 (ASLDGKKKQEGRRDFLKILLGNAGVGLVASGKANA) constitute a thylakoid transit peptide. At 83–167 (DEQGVSSSRM…AHNAQEDQGS (85 aa)) the chain is on the lumenal, thylakoid side. A helical membrane pass occupies residues 168–188 (VLFNLIGNLAFPALLIGGLFL). Topologically, residues 189 to 695 (LSRRSGGGMG…PASAPTPAAV (507 aa)) are stromal. Position 267-274 (267-274 (GPPGTGKT)) interacts with ATP. His-488 provides a ligand contact to Zn(2+). The active site involves Glu-489. Residues His-492 and Asp-566 each coordinate Zn(2+). Residues 673–695 (PPENRVPSSTTTTPASAPTPAAV) form a disordered region. The segment covering 679–695 (PSSTTTTPASAPTPAAV) has biased composition (low complexity).

In the N-terminal section; belongs to the AAA ATPase family. The protein in the C-terminal section; belongs to the peptidase M41 family. As to quaternary structure, interacts with CHIP and FTSH5. Heterohexamers with FTSH1, FTSH5 and FTSH8. May also form homooligomers. It depends on Zn(2+) as a cofactor. Post-translationally, the FTSH2 precursor is ubiquitinated by CHIP in the cytoplasm. In terms of tissue distribution, expressed in cotyledons, cauline and rosette leaves, stems, sepals, flovers and siliques. Very low in roots.

It is found in the plastid. It localises to the chloroplast thylakoid membrane. Functionally, part of a complex that function as an ATP-dependent zinc metallopeptidase. Involved in the thylakoid formation and in the removal of damaged D1 in the photosystem II, preventing cell death under high-intensity light conditions, but not involved in thermotolerance. This Arabidopsis thaliana (Mouse-ear cress) protein is ATP-dependent zinc metalloprotease FTSH 2, chloroplastic (FTSH2).